The sequence spans 166 residues: Ribosome maturation factor RimM (166 aa).

Positions 91–163 (DDGFYDHELE…TCVITPPEGL (73 aa)) constitute a PRC barrel domain.

This sequence belongs to the RimM family. Binds ribosomal protein uS19.

The protein resides in the cytoplasm. Functionally, an accessory protein needed during the final step in the assembly of 30S ribosomal subunit, possibly for assembly of the head region. Essential for efficient processing of 16S rRNA. May be needed both before and after RbfA during the maturation of 16S rRNA. It has affinity for free ribosomal 30S subunits but not for 70S ribosomes. The protein is Ribosome maturation factor RimM of Corynebacterium diphtheriae (strain ATCC 700971 / NCTC 13129 / Biotype gravis).